The sequence spans 127 residues: Glycine cleavage system H protein (127 aa).

Positions 22–104 (QVVIGITHFA…YEGAWMVKVE (83 aa)) constitute a Lipoyl-binding domain. Lys-63 carries the post-translational modification N6-lipoyllysine.

The protein belongs to the GcvH family. As to quaternary structure, the glycine cleavage system is composed of four proteins: P, T, L and H. (R)-lipoate is required as a cofactor.

In terms of biological role, the glycine cleavage system catalyzes the degradation of glycine. The H protein shuttles the methylamine group of glycine from the P protein to the T protein. Functionally, is also involved in protein lipoylation via its role as an octanoyl/lipoyl carrier protein intermediate. The sequence is that of Glycine cleavage system H protein from Bacillus cytotoxicus (strain DSM 22905 / CIP 110041 / 391-98 / NVH 391-98).